A 217-amino-acid chain; its full sequence is GTP cyclohydrolase 1 (217 aa).

Residues Cys109, His112, and Cys180 each coordinate Zn(2+).

Belongs to the GTP cyclohydrolase I family. Toroid-shaped homodecamer, composed of two pentamers of five dimers.

The catalysed reaction is GTP + H2O = 7,8-dihydroneopterin 3'-triphosphate + formate + H(+). It participates in cofactor biosynthesis; 7,8-dihydroneopterin triphosphate biosynthesis; 7,8-dihydroneopterin triphosphate from GTP: step 1/1. The protein is GTP cyclohydrolase 1 of Photobacterium profundum (strain SS9).